The sequence spans 664 residues: Macoilin (664 aa).

The next 4 membrane-spanning stretches (helical) occupy residues Thr-28–Leu-48, Ala-75–Ile-95, Val-120–Phe-140, and Phe-154–Val-174. Basic and acidic residues predominate over residues Arg-253–Lys-265. Residues Arg-253–Asn-274 form a disordered region. Position 305 is a phosphoserine (Ser-305). Polar residues predominate over residues Lys-320–Ser-348. A disordered region spans residues Lys-320–Asn-375. The N-linked (GlcNAc...) asparagine glycan is linked to Asn-324. Position 332 is a phosphoserine (Ser-332). N-linked (GlcNAc...) asparagine glycans are attached at residues Asn-340 and Asn-452. Positions Thr-630–Lys-664 are disordered. Residues Ser-631 and Ser-634 each carry the phosphoserine modification. Residue Asn-655 is glycosylated (N-linked (GlcNAc...) asparagine).

It belongs to the macoilin family. Strong expression in whole nervous system up to 12.5 dpc. Highly expressed in all neuronal differentiation fields from 14.5 dpc to birth, with highest expression in the telencephalic cortical plate and mitral cells in the olfactory bulb, and lower expression in neuronal progenitor zones. Progressively decreased expression in fields of neuron precursor proliferation from 14.5 dpc and virtually undetectable there by 17.5 dpc. No significant expression detected outside the nervous system. After birth, significant expression remains in the cerebellum, olfactory bulb and hippocampus.

The protein resides in the rough endoplasmic reticulum membrane. Its subcellular location is the nucleus membrane. Functionally, plays a role in the regulation of neuronal activity. This chain is Macoilin (Maco1), found in Mus musculus (Mouse).